The chain runs to 361 residues: MRVDLFDFDLPDERIALRPAEPRDSARLLVIDPNAENSLSDHRVGDLTSFLRAGDALVFNDTKVIPAQLEGIRHRDGAGGQQVSATLHMRTSPSRWKAFAKPGKRIKQGDRISFGHSGESCFLGSLDATVEEKGEAGEVTLLFDLSGPALDEAIAAVGHIPLPPYIAAKRPEDERDRADYQTIYAREEGAVAAPTAGLHFTPGLFEALDRAGIERHFVTLHVGAGTFLPVKADDTADHKMHLESGYVSAEIAARLNAVRERGGRIVCVGTTSLRLIESAAEESGEIMPWAGATGIFITPGYRFKAVDMLMTNFHLPRSTLFMLVSAFAGFETMHAAYKHAISTGYRFYSYGDASLLFRKDR.

The protein belongs to the QueA family. In terms of assembly, monomer.

The protein localises to the cytoplasm. It carries out the reaction 7-aminomethyl-7-carbaguanosine(34) in tRNA + S-adenosyl-L-methionine = epoxyqueuosine(34) in tRNA + adenine + L-methionine + 2 H(+). The protein operates within tRNA modification; tRNA-queuosine biosynthesis. Transfers and isomerizes the ribose moiety from AdoMet to the 7-aminomethyl group of 7-deazaguanine (preQ1-tRNA) to give epoxyqueuosine (oQ-tRNA). This chain is S-adenosylmethionine:tRNA ribosyltransferase-isomerase, found in Rhizobium johnstonii (strain DSM 114642 / LMG 32736 / 3841) (Rhizobium leguminosarum bv. viciae).